The following is a 136-amino-acid chain: Plastocyanin (136 aa).

The signal sequence occupies residues 1–34; the sequence is MSLVFNLVKRLQLILLSLVVGGLAVAFLSNPAAA. A Plastocyanin-like domain is found at 35–136; the sequence is ETYIVKMGSD…GMVGKIIVNG (102 aa). Cu cation contacts are provided by histidine 73, cysteine 120, histidine 123, and methionine 128.

It belongs to the plastocyanin family. It depends on Cu(2+) as a cofactor.

It localises to the cellular thylakoid membrane. Functionally, participates in electron transfer between P700 and the cytochrome b6-f complex in photosystem I. The sequence is that of Plastocyanin from Synechococcus sp. (strain JA-2-3B'a(2-13)) (Cyanobacteria bacterium Yellowstone B-Prime).